A 176-amino-acid polypeptide reads, in one-letter code: Ferritin heavy polypeptide-like 17E (176 aa).

The 150-residue stretch at 10 to 159 folds into the Ferritin-like diiron domain; that stretch reads QNYDWQCEDA…GYLTNLRQMG (150 aa). 3 residues coordinate Fe cation: Cys27, Glu107, and Gln141.

It belongs to the ferritin family. Expressed in the testes and spermatogonia.

This chain is Ferritin heavy polypeptide-like 17E, found in Mus musculus (Mouse).